The sequence spans 290 residues: MSEKKEIKNKINCISNTKKITKAMEMVSIAKMKKSEIKMKSRKPYLDIIKTIISHILYNHIKYRHLYLNNRKTKKIGIIVISTDRGLCGSLNISLFKKIIQLINIYKNKNVMSSLFILGSKGVSYFKSSTYDITYYEKIITKNYTFFDCLNFIHSSLEYYNTQKIDKLFLSYNQFKNTLVYIPVIMQLLPLSKKIFKGNKNSHWDYIYESNSGILLDTLLNDYIESQIYQSILENCTCEQASRMISMKQATDNSEDLIKKLRILYNKARQDNITQELTEIISGANAVSLY.

The protein belongs to the ATPase gamma chain family. In terms of assembly, F-type ATPases have 2 components, CF(1) - the catalytic core - and CF(0) - the membrane proton channel. CF(1) has five subunits: alpha(3), beta(3), gamma(1), delta(1), epsilon(1). CF(0) has three main subunits: a, b and c.

The protein localises to the cell membrane. Produces ATP from ADP in the presence of a proton gradient across the membrane. The gamma chain is believed to be important in regulating ATPase activity and the flow of protons through the CF(0) complex. In Buchnera aphidicola subsp. Schlechtendalia chinensis, this protein is ATP synthase gamma chain.